Here is a 304-residue protein sequence, read N- to C-terminus: N-carbamoyl-D-amino acid hydrolase (304 aa).

Residues 5–276 (MILAVGQQGP…DEVITAAVCL (272 aa)) form the CN hydrolase domain. Active-site residues include Glu-47, Lys-127, and Cys-172.

In terms of assembly, homotetramer.

The catalysed reaction is an N-carbamoyl-D-amino acid + H2O + 2 H(+) = a D-alpha-amino acid + NH4(+) + CO2. Its activity is regulated as follows. The activity decreases with increasing concentration of H(2)O(2). Has 68% and 43% of activity remaining upon treatment with 0.1 and 0.2 mM H(2)O(2) for 30 minutes, respectively. Inhibited significantly by 2 mM Zn(2+), Cu(2+) and Ag(+), moderately by Co(2+), Mn(2+), Sn(2+) and Mg(2+), and only slightly by Ba(2+). Slightly activated by Fe(2+) and Ca(2+). No effect on activity by metal chelators EDTA and 8-hydroxyquinoline at 2 mM or by dithiothreitol, 2-mercaptoethanol or phenylmethanesulfonyl fluoride. Functionally, catalyzes the hydrolysis of N-carbamoyl-D-amino acids to the corresponding D-amino acids. Hydrolyzes aromatic and aliphatic N-carbamoyl-D-amino acids in vitro. Effectively hydrolyzes N-carbamoyl-D-p-hydroxyphenylglycine and N-carbamoyl-DL-p-hydroxyphenylglycine, and to a lesser extent N-carbamoyl-D-methionine. No activity for N-carbamoyl-L-amino acids, N-carbamoyl-beta-alanine or (RS)-alpha-ethyl-N-carbamoylphenylglycine in vitro. The protein is N-carbamoyl-D-amino acid hydrolase of Ensifer adhaerens (Sinorhizobium morelense).